The primary structure comprises 316 residues: uncharacterized protein (316 aa).

A disordered region spans residues 1–34 (MATKRKIGDGYSSSDDNQPKRERSEGGEDQQLVP). Positions 17 to 26 (NQPKRERSEG) are enriched in basic and acidic residues.

This is an uncharacterized protein from Lepidoptera (butterflies and moths).